The chain runs to 477 residues: ATP synthase subunit beta (477 aa).

Residue 148-155 (GGAGVGKT) coordinates ATP.

Belongs to the ATPase alpha/beta chains family. As to quaternary structure, F-type ATPases have 2 components, CF(1) - the catalytic core - and CF(0) - the membrane proton channel. CF(1) has five subunits: alpha(3), beta(3), gamma(1), delta(1), epsilon(1). CF(0) has three main subunits: a(1), b(2) and c(9-12). The alpha and beta chains form an alternating ring which encloses part of the gamma chain. CF(1) is attached to CF(0) by a central stalk formed by the gamma and epsilon chains, while a peripheral stalk is formed by the delta and b chains.

It localises to the cell inner membrane. It catalyses the reaction ATP + H2O + 4 H(+)(in) = ADP + phosphate + 5 H(+)(out). Functionally, produces ATP from ADP in the presence of a proton gradient across the membrane. The catalytic sites are hosted primarily by the beta subunits. In Psychrobacter arcticus (strain DSM 17307 / VKM B-2377 / 273-4), this protein is ATP synthase subunit beta.